Here is a 341-residue protein sequence, read N- to C-terminus: 4-hydroxy-2-oxovalerate aldolase (341 aa).

A Pyruvate carboxyltransferase domain is found at 9 to 259 (VRITEVCLRD…KLDIDLYKMM (251 aa)). Residue 17 to 18 (RD) participates in substrate binding. Asp-18 provides a ligand contact to Mn(2+). The Proton acceptor role is filled by His-21. Substrate is bound by residues Ser-171 and His-198. Residues His-198 and His-200 each contribute to the Mn(2+) site. A substrate-binding site is contributed by Tyr-289.

The protein belongs to the 4-hydroxy-2-oxovalerate aldolase family.

The enzyme catalyses (S)-4-hydroxy-2-oxopentanoate = acetaldehyde + pyruvate. This chain is 4-hydroxy-2-oxovalerate aldolase (dmpG), found in Bacillus cereus (strain 03BB102).